The sequence spans 254 residues: Mitochondrial cardiolipin hydrolase (254 aa).

At methionine 1–alanine 9 the chain is on the mitochondrial intermembrane side. Positions methionine 1–arginine 43 are required for mitochondrial localization. Residues alanine 10–alanine 32 form a helical membrane-spanning segment. The Cytoplasmic portion of the chain corresponds to glycine 33–valine 254. The C3H1-type; atypical zinc-finger motif lies at proline 49–serine 82. The region spanning aspartate 155–alanine 182 is the PLD phosphodiesterase domain. Catalysis depends on residues histidine 160, lysine 162, and aspartate 167.

This sequence belongs to the phospholipase D family. MitoPLD/Zucchini subfamily. Homodimer. Interacts with MOV10L1. Interacts with MIGA1 and MIGA2; possibly facilitating homodimer formation. Interacts with GK2.

Its subcellular location is the mitochondrion outer membrane. The protein localises to the nucleus membrane. It is found in the cell membrane. The protein resides in the golgi apparatus. The catalysed reaction is a cardiolipin + H2O = a 1,2-diacyl-sn-glycero-3-phospho-(1'-sn-glycerol) + a 1,2-diacyl-sn-glycero-3-phosphate + H(+). With respect to regulation, single stranded DNA (ssDNA) hydrolase activity does not depend upon, but is stimulated by the presence of Ca(2+) and Mn(2+). MIGA1 and MIGA2 increase PLD6 self-association affinity and affects the homodimer conformation facilitating its phospholipase activity over the nuclease activity. MYC induces its expression and stimulates its phospholipase activity. Functionally, presents phospholipase and nuclease activities, depending on the different physiological conditions. Interaction with Mitoguardin (MIGA1 or MIGA2) affects the dimer conformation, facilitating the lipase activity over the nuclease activity. Plays a key role in mitochondrial fusion and fission via its phospholipase activity. In its phospholipase role, it uses the mitochondrial lipid cardiolipin as substrate to generate phosphatidate (PA or 1,2-diacyl-sn-glycero-3-phosphate), a second messenger signaling lipid. Production of PA facilitates Mitofusin-mediated fusion, whereas the cleavage of PA by the Lipin family of phosphatases produces diacylgycerol (DAG) which promotes mitochondrial fission. Both Lipin and DAG regulate mitochondrial dynamics and membrane fusion/fission, important processes for adapting mitochondrial metabolism to changes in cell physiology. Mitochondrial fusion enables cells to cope with the increased nucleotide demand during DNA synthesis. Mitochondrial function and dynamics are closely associated with biological processes such as cell growth, proliferation, and differentiation. Mediator of MYC activity, promotes mitochondrial fusion and activates AMPK which in turn inhibits YAP/TAZ, thereby inducing cell growth and proliferation. The endonuclease activity plays a critical role in PIWI-interacting RNA (piRNA) biogenesis during spermatogenesis. Implicated in spermatogenesis and sperm fertility in testicular germ cells, its single strand-specific nuclease activity is critical for the biogenesis/maturation of PIWI-interacting RNA (piRNA). MOV10L1 selectively binds to piRNA precursors and funnels them to the endonuclease that catalyzes the first cleavage step of piRNA processing to generate piRNA intermediate fragments that are subsequently loaded to Piwi proteins. Cleaves either DNA or RNA substrates with similar affinity, producing a 5' phosphate end, in this way it participates in the processing of primary piRNA transcripts. piRNAs provide essential protection against the activity of mobile genetic elements. piRNA-mediated transposon silencing is thus critical for maintaining genome stability, in particular in germline cells when transposons are mobilized as a consequence of wide-spread genomic demethylation. PA may act as signaling molecule in the recognition/transport of the precursor RNAs of primary piRNAs. Interacts with tesmin in testes, suggesting a role in spermatogenesis via association with its interacting partner. The chain is Mitochondrial cardiolipin hydrolase (PLD6) from Canis lupus familiaris (Dog).